The sequence spans 179 residues: Avenin-like a2 (179 aa).

An N-terminal signal peptide occupies residues 1–19; it reads MKTMFLLALLAFTATSAVA.

This sequence belongs to the prolamin family. Contains 7 disulfide bonds.

In terms of biological role, seed storage protein. Not integrated in the gluten polymer through disulfide bonds, unless incorporated by reduction and reoxidation during dough making. Increases dough strength and bread volume, but decreases dough stability when added into a base wheat flour. The polypeptide is Avenin-like a2 (Triticum aestivum (Wheat)).